A 416-amino-acid chain; its full sequence is Cyclic dinucleotide synthase CdnG (416 aa).

Serine 72 contributes to the GTP binding site. Residues aspartate 89, aspartate 91, and aspartate 140 contribute to the active site. Aspartate 91 contacts GTP. Aspartate 91 is a Mg(2+) binding site. A disordered region spans residues 145–167; it reads RRRAPKEKEGEIPHAKKGTRSDP. Residues 150-167 show a composition bias toward basic and acidic residues; that stretch reads KEKEGEIPHAKKGTRSDP. GTP-binding residues include lysine 236, serine 253, glutamate 305, arginine 306, and aspartate 309.

The protein belongs to the CD-NTase family. G10 subfamily. The cofactor is Mg(2+).

The catalysed reaction is UTP + GTP = 3',3'-cGMP-UMP + 2 diphosphate. It carries out the reaction GTP + ATP = 3',3'-cGAMP + 2 diphosphate. The enzyme catalyses 2 ATP = 3',3'-c-di-AMP + 2 diphosphate. Functionally, cyclic nucleotide synthase (second messenger synthase) of a CBASS antivirus system. CBASS (cyclic oligonucleotide-based antiphage signaling system) provides immunity against bacteriophage. The CD-NTase protein synthesizes cyclic nucleotides in response to infection; these serve as specific second messenger signals. The signals activate a diverse range of effectors, leading to bacterial cell death and thus abortive phage infection. A type II-short CBASS system. Cyclic dinucleotide synthase that catalyzes the synthesis of predominantly 3'3'-cGMP-UMP, followed by 3'3'-cGAMP and c-di-AMP in a reaction mixture of ATP, CTP, GTP and UTP. The cyclic nucleotide products are second messengers that activate the CBASS Cap5 effector nuclease, leading to DNA degradation and probably cell death. Cyclic nucleotides do not activate the effector equally; reactions with ATP/GTP, ATP/UTP and ATP alone activate Cap5, whereas reaction with GTP/UTP (the major in vitro product) do not. This Bradyrhizobium diazoefficiens (strain JCM 10833 / BCRC 13528 / IAM 13628 / NBRC 14792 / USDA 110) protein is Cyclic dinucleotide synthase CdnG.